Here is a 414-residue protein sequence, read N- to C-terminus: WD repeat-containing protein jip5 (414 aa).

WD repeat units lie at residues 9–48 (PLSA…SSDD), 73–112 (RHKG…VENK), 118–159 (AKDG…SNVS), 222–263 (VSSV…DQDE), and 319–356 (DETE…NDMD). A disordered region spans residues 39-65 (RLPSEESSDDDDGTASNSSARNGKGHI). Positions 357–414 (VDMAGGKRMFGGDSDDSDDDNDSEDSEQEQRQPVEPQRKRKKNKGKGKRDIIAFADID) are disordered. Residues 369 to 383 (DSDDSDDDNDSEDSE) show a composition bias toward acidic residues. Positions 394–403 (RKRKKNKGKG) are enriched in basic residues.

It belongs to the WD repeat WDR55 family.

The protein resides in the nucleus. The protein localises to the nucleolus. This chain is WD repeat-containing protein jip5 (jip5), found in Aspergillus clavatus (strain ATCC 1007 / CBS 513.65 / DSM 816 / NCTC 3887 / NRRL 1 / QM 1276 / 107).